We begin with the raw amino-acid sequence, 481 residues long: MTPALTALLCLGLSLGPRTHVQAGPLPKPTLWAEPGSVISWRSPVTIWCQGSLEAQEYRLYKEGSREPRDTQNPMEPKNKARFSIPSMTEHHAGRYRCYYRSPAGWSEPSDPLELVVTGFYSTPTLSALPSPVVASGGNVTLRCGSQKGYDHFVLMKEGEHQLPQTLDSQHLHSGGFQALFPVGPVTPSHRWTFTCYGSYRNTPQVWSHPSDPLEILPSGVSRKPSLLTLQGPVLAPGESLTLQCGSDVGYDRFTLYKEGERDFLQLPGPQPQAGLSQANFTLGPVSRSHGGQYRCYGAHNLSSEWSAPSDPLNILIAGQFYDRVSLSLQPDPTVASGENVTLLCQSQGQFDTFLLTKEGAAHPPLRLRSKYQSQKYQAEFPMNPVTSAHAGTYRCYGSYSSNPHLLSFPSDPLKLMVSGPSGGPSLPPTGPPSTPASHAKDYTVENLIRMGMAGLVLVVLGILLFEAQHSQRSPQDAARR.

The signal sequence occupies residues 1 to 23 (MTPALTALLCLGLSLGPRTHVQA). Positions 24–118 (GPLPKPTLWA…PSDPLELVVT (95 aa)) constitute an Ig-like C2-type 1 domain. The Extracellular segment spans residues 24–447 (GPLPKPTLWA…SHAKDYTVEN (424 aa)). Cysteines 49 and 98 form a disulfide. N-linked (GlcNAc...) asparagine glycosylation is present at Asn139. Cystine bridges form between Cys144–Cys196 and Cys245–Cys296. 2 consecutive Ig-like C2-type domains span residues 225–314 (PSLL…DPLN) and 323–408 (DRVS…HLLS). N-linked (GlcNAc...) asparagine glycans are attached at residues Asn301 and Asn340. A disulfide bridge links Cys345 with Cys396. Residues 418-439 (VSGPSGGPSLPPTGPPSTPASH) are disordered. A compositionally biased stretch (pro residues) spans 426–435 (SLPPTGPPST). The helical transmembrane segment at 448–468 (LIRMGMAGLVLVVLGILLFEA) threads the bilayer. The Cytoplasmic segment spans residues 469-481 (QHSQRSPQDAARR).

Its subcellular location is the membrane. Its function is as follows. May act as receptor for class I MHC antigens. In Pan troglodytes (Chimpanzee), this protein is Leukocyte immunoglobulin-like receptor subfamily A member 6 (LILRA6).